Consider the following 298-residue polypeptide: Acetylglutamate kinase (298 aa).

Residues Gly69–Gly70, Arg91, and Asn196 contribute to the substrate site.

It belongs to the acetylglutamate kinase family. ArgB subfamily.

Its subcellular location is the cytoplasm. The catalysed reaction is N-acetyl-L-glutamate + ATP = N-acetyl-L-glutamyl 5-phosphate + ADP. The protein operates within amino-acid biosynthesis; L-arginine biosynthesis; N(2)-acetyl-L-ornithine from L-glutamate: step 2/4. Functionally, catalyzes the ATP-dependent phosphorylation of N-acetyl-L-glutamate. This chain is Acetylglutamate kinase, found in Bradyrhizobium sp. (strain ORS 278).